Here is a 373-residue protein sequence, read N- to C-terminus: Cytoplasmic tRNA 2-thiolation protein 1 (373 aa).

The protein belongs to the TtcA family. CTU1/NCS6/ATPBD3 subfamily.

It is found in the cytoplasm. It functions in the pathway tRNA modification; 5-methoxycarbonylmethyl-2-thiouridine-tRNA biosynthesis. Its function is as follows. Plays a central role in 2-thiolation of mcm(5)S(2)U at tRNA wobble positions of tRNA(Lys), tRNA(Glu) and tRNA(Gln). Directly binds tRNAs and probably acts by catalyzing adenylation of tRNAs, an intermediate required for 2-thiolation. It is unclear whether it acts as a sulfurtransferase that transfers sulfur from thiocarboxylated URM1 onto the uridine of tRNAs at wobble position. The protein is Cytoplasmic tRNA 2-thiolation protein 1 of Caenorhabditis elegans.